We begin with the raw amino-acid sequence, 649 residues long: tRNA-guanine(15) transglycosylase (649 aa).

The Nucleophile role is filled by Asp88. Residues Asp123 and Ala194 each contribute to the substrate site. Zn(2+) is bound by residues Cys280, Cys282, and Cys285. Residues 573–648 form the PUA domain; that stretch reads KYRIVIDSSV…VAVTLRGGLK (76 aa).

Belongs to the archaeosine tRNA-ribosyltransferase family. Requires Zn(2+) as cofactor.

The catalysed reaction is guanosine(15) in tRNA + 7-cyano-7-deazaguanine = 7-cyano-7-carbaguanosine(15) in tRNA + guanine. It participates in tRNA modification; archaeosine-tRNA biosynthesis. In terms of biological role, exchanges the guanine residue with 7-cyano-7-deazaguanine (preQ0) at position 15 in the dihydrouridine loop (D-loop) of archaeal tRNAs. The chain is tRNA-guanine(15) transglycosylase from Methanococcus maripaludis (strain C7 / ATCC BAA-1331).